Reading from the N-terminus, the 450-residue chain is Phosphoglucosamine mutase (450 aa).

Ser102 functions as the Phosphoserine intermediate in the catalytic mechanism. Mg(2+) is bound by residues Ser102, Asp244, Asp246, and Asp248. A Phosphoserine modification is found at Ser102.

It belongs to the phosphohexose mutase family. Mg(2+) is required as a cofactor. Post-translationally, activated by phosphorylation.

It catalyses the reaction alpha-D-glucosamine 1-phosphate = D-glucosamine 6-phosphate. Catalyzes the conversion of glucosamine-6-phosphate to glucosamine-1-phosphate. The sequence is that of Phosphoglucosamine mutase from Nitratidesulfovibrio vulgaris (strain DSM 19637 / Miyazaki F) (Desulfovibrio vulgaris).